Reading from the N-terminus, the 310-residue chain is N-acetyl-gamma-glutamyl-phosphate reductase (310 aa).

Residue Cys-117 is part of the active site.

This sequence belongs to the NAGSA dehydrogenase family. Type 2 subfamily.

The protein resides in the cytoplasm. It carries out the reaction N-acetyl-L-glutamate 5-semialdehyde + phosphate + NADP(+) = N-acetyl-L-glutamyl 5-phosphate + NADPH + H(+). It functions in the pathway amino-acid biosynthesis; L-arginine biosynthesis; N(2)-acetyl-L-ornithine from L-glutamate: step 3/4. In terms of biological role, catalyzes the NADPH-dependent reduction of N-acetyl-5-glutamyl phosphate to yield N-acetyl-L-glutamate 5-semialdehyde. The sequence is that of N-acetyl-gamma-glutamyl-phosphate reductase from Brucella ovis (strain ATCC 25840 / 63/290 / NCTC 10512).